The following is a 314-amino-acid chain: Olfactory receptor 5I1 (314 aa).

At 1 to 27 (MEFTDRNYTLVTEFILLGFPTRPELQI) the chain is on the extracellular side. N-linked (GlcNAc...) asparagine glycosylation occurs at Asn-7. The helical transmembrane segment at 28-48 (VLFLMFLTLYAIILIGNIGLM) threads the bilayer. Residues 49–56 (LLIRIDPH) are Cytoplasmic-facing. Residues 57-77 (LQTPMYFFLSNLSFVDLCYFS) traverse the membrane as a helical segment. Residues 78-101 (DIVPKMLVNFLSENKSISYYGCAL) are Extracellular-facing. A disulfide bond links Cys-99 and Cys-191. The helical transmembrane segment at 102–122 (QFYFFCTFADTESFILAAMAY) threads the bilayer. The Cytoplasmic portion of the chain corresponds to 123–141 (DRYVAICNPLLYTVVMSRG). Residues 142–162 (ICMRLIVLSYLGGNMSSLVHT) traverse the membrane as a helical segment. The Extracellular portion of the chain corresponds to 163–198 (SFAFILKYCDKNVINHFFCDLPPLLKLSCTDTTINE). Residues 199–219 (WLLSTYGSSVEIICFIIIIIS) traverse the membrane as a helical segment. At 220–239 (YFFILLSVLKIRSFSGRKKT) the chain is on the cytoplasmic side. The chain crosses the membrane as a helical span at residues 240-260 (FSTCASHLTSVTIYQGTLLFI). The Extracellular portion of the chain corresponds to 261–273 (YSRPSYLYSPNTD). Residues 274-294 (KIISVFYTIFIPVLNPLIYSL) form a helical membrane-spanning segment. At 295-314 (RNKDVKDAAEKVLRSKVDSS) the chain is on the cytoplasmic side.

This sequence belongs to the G-protein coupled receptor 1 family.

The protein resides in the cell membrane. Its function is as follows. Odorant receptor. This Homo sapiens (Human) protein is Olfactory receptor 5I1 (OR5I1).